The primary structure comprises 425 residues: Dihydroorotase (425 aa).

Zn(2+)-binding residues include His59 and His61. Substrate contacts are provided by residues 61–63 (HLR) and Asn93. 3 residues coordinate Zn(2+): Asp151, His178, and His231. Asn277 lines the substrate pocket. A Zn(2+)-binding site is contributed by Asp304. Residue Asp304 is part of the active site. Residues His308 and 322-323 (FG) each bind substrate.

The protein belongs to the metallo-dependent hydrolases superfamily. DHOase family. Class I DHOase subfamily. The cofactor is Zn(2+).

The catalysed reaction is (S)-dihydroorotate + H2O = N-carbamoyl-L-aspartate + H(+). Its pathway is pyrimidine metabolism; UMP biosynthesis via de novo pathway; (S)-dihydroorotate from bicarbonate: step 3/3. In terms of biological role, catalyzes the reversible cyclization of carbamoyl aspartate to dihydroorotate. The protein is Dihydroorotase of Staphylococcus epidermidis (strain ATCC 35984 / DSM 28319 / BCRC 17069 / CCUG 31568 / BM 3577 / RP62A).